A 1191-amino-acid chain; its full sequence is uncharacterized protein (1191 aa).

WD repeat units follow at residues 558 to 588, 599 to 629, 640 to 670, 682 to 712, 723 to 753, 764 to 794, 805 to 835, 995 to 1025, 1036 to 1066, 1077 to 1107, and 1118 to 1148; these read GHRD…HLWT, GHTG…KIWD, GHQD…RLWH, GHTK…RLWD, LPEV…RLWT, GHDE…IHWS, GYPE…KVWD, QRKE…TLWN, AHGD…KIWS, SDPL…RLWD, and STSG…QSWP.

This is an uncharacterized protein from Synechocystis sp. (strain ATCC 27184 / PCC 6803 / Kazusa).